Reading from the N-terminus, the 203-residue chain is 3-isopropylmalate dehydratase small subunit (203 aa).

Belongs to the LeuD family. LeuD type 1 subfamily. Heterodimer of LeuC and LeuD.

It catalyses the reaction (2R,3S)-3-isopropylmalate = (2S)-2-isopropylmalate. The protein operates within amino-acid biosynthesis; L-leucine biosynthesis; L-leucine from 3-methyl-2-oxobutanoate: step 2/4. Its function is as follows. Catalyzes the isomerization between 2-isopropylmalate and 3-isopropylmalate, via the formation of 2-isopropylmaleate. This Symbiobacterium thermophilum (strain DSM 24528 / JCM 14929 / IAM 14863 / T) protein is 3-isopropylmalate dehydratase small subunit.